Here is a 478-residue protein sequence, read N- to C-terminus: Ankyrin repeat and BTB/POZ domain-containing protein 1 (478 aa).

ANK repeat units follow at residues 1–31 and 35–64; these read MDTSDLFASCRKGDVGRVRYLLEQRDVEVNV and WDSTPLYYACLCGHEELVRYLLANGARCEA. BTB domains are found at residues 115–182 and 272–346; these read SDVV…DIGV and PDIC…ELPP. Residues 451–477 are a coiled coil; that stretch reads VQTYSAIEEAQQRLRALEDLLVSIGLD.

The protein resides in the cytoplasm. In terms of biological role, may act as a mediator of the PTEN growth-suppressive signaling pathway. May play a role in developmental processes. The sequence is that of Ankyrin repeat and BTB/POZ domain-containing protein 1 from Mus musculus (Mouse).